A 258-amino-acid chain; its full sequence is MLILVSPAKTLDYETPASTQTFTMPALLEHSEALIKVCRELTPADIASLMKVSDKIAGLNAARFAEWHRDFNLDNAKQALFAFRGDVYTGLDADTLSEGSLARAQQHLRILSGLYGLLRPLDLMQAYRLEMGTKLANDRGANLYQFWGDIVTQEVNKALAEQGDDILVNLASNEYFKSVKPKQIQGQVITPIFKDKKNGQYKVISFFAKKARGMMVRYMLDNKVSRYEELLKFDTAGYYYSEADSSVNEPVFLREEQA.

It belongs to the UPF0246 family.

In Shewanella loihica (strain ATCC BAA-1088 / PV-4), this protein is UPF0246 protein Shew_1093.